A 308-amino-acid polypeptide reads, in one-letter code: GMP synthase [glutamine-hydrolyzing] subunit B (308 aa).

The GMPS ATP-PPase domain maps to 1–185; that stretch reads MDWGRFVEEK…LGLPEKIYNR (185 aa). 28 to 34 is an ATP binding site; it reads SGGVDSS.

In terms of assembly, heterodimer composed of a glutamine amidotransferase subunit (A) and a GMP-binding subunit (B).

It carries out the reaction XMP + L-glutamine + ATP + H2O = GMP + L-glutamate + AMP + diphosphate + 2 H(+). It participates in purine metabolism; GMP biosynthesis; GMP from XMP (L-Gln route): step 1/1. Catalyzes the synthesis of GMP from XMP. The chain is GMP synthase [glutamine-hydrolyzing] subunit B (guaAB) from Pyrococcus horikoshii (strain ATCC 700860 / DSM 12428 / JCM 9974 / NBRC 100139 / OT-3).